Consider the following 236-residue polypeptide: MHNVDQQELSKFEQMAHSWWDPNGSFKPIHLLNPLRFNYIQTKANGLFGKKVLDVGCGGGILSEAMAQAGAIVTGIDMTTEPLEIAKQHAIENGLTIHYQQTTVEDLRLNHTACNAEKFDVVTCMEMLEHVPDPLSVIQSCKALLKPDGVLFLSTINRTLKAYMLVVIGAEYLLKMLPKGTHEFEKFIKPAELLTWCDQASLECKEMKGYHFNPLTEKFWLNNDVSCNYIAMLKAK.

S-adenosyl-L-methionine contacts are provided by Arg-36, Gly-56, Asp-77, and Met-125.

This sequence belongs to the methyltransferase superfamily. UbiG/COQ3 family.

The enzyme catalyses a 3-demethylubiquinol + S-adenosyl-L-methionine = a ubiquinol + S-adenosyl-L-homocysteine + H(+). It catalyses the reaction a 3-(all-trans-polyprenyl)benzene-1,2-diol + S-adenosyl-L-methionine = a 2-methoxy-6-(all-trans-polyprenyl)phenol + S-adenosyl-L-homocysteine + H(+). It functions in the pathway cofactor biosynthesis; ubiquinone biosynthesis. In terms of biological role, O-methyltransferase that catalyzes the 2 O-methylation steps in the ubiquinone biosynthetic pathway. This Haemophilus ducreyi (strain 35000HP / ATCC 700724) protein is Ubiquinone biosynthesis O-methyltransferase.